We begin with the raw amino-acid sequence, 388 residues long: Mycinamicin VIII C21 methyl hydroxylase (388 aa).

Residues His-87, Arg-91, Arg-279, His-335, and Cys-337 each coordinate heme.

It belongs to the cytochrome P450 family. The cofactor is heme.

It participates in antibiotic biosynthesis; mycinamicin biosynthesis. In terms of biological role, involved in the biosynthesis of mycinamicin, a 16-membered macrolide antibiotic. Catalyzes hydroxylation at the C21 methyl group of mycinamicin VIII, the earliest macrolide form in the postpolyketide synthase tailoring pathway, leading to mycinamicin VII. Uses ferredoxin MycCII in electron transfer for catalysis. This Micromonospora griseorubida protein is Mycinamicin VIII C21 methyl hydroxylase.